The chain runs to 338 residues: Aspartate carbamoyltransferase catalytic subunit (338 aa).

2 residues coordinate carbamoyl phosphate: R72 and T73. K100 is a binding site for L-aspartate. Carbamoyl phosphate-binding residues include R122, H152, and Q155. 2 residues coordinate L-aspartate: R186 and R243. Carbamoyl phosphate-binding residues include G284 and P285.

This sequence belongs to the aspartate/ornithine carbamoyltransferase superfamily. ATCase family. In terms of assembly, heterododecamer (2C3:3R2) of six catalytic PyrB chains organized as two trimers (C3), and six regulatory PyrI chains organized as three dimers (R2).

The catalysed reaction is carbamoyl phosphate + L-aspartate = N-carbamoyl-L-aspartate + phosphate + H(+). Its pathway is pyrimidine metabolism; UMP biosynthesis via de novo pathway; (S)-dihydroorotate from bicarbonate: step 2/3. Catalyzes the condensation of carbamoyl phosphate and aspartate to form carbamoyl aspartate and inorganic phosphate, the committed step in the de novo pyrimidine nucleotide biosynthesis pathway. The protein is Aspartate carbamoyltransferase catalytic subunit of Acinetobacter baumannii (strain ACICU).